Consider the following 153-residue polypeptide: ATP synthase subunit b' (153 aa).

The helical transmembrane segment at 23–40 (LMAIQVVALTYILNSLFF) threads the bilayer.

Belongs to the ATPase B chain family. F-type ATPases have 2 components, F(1) - the catalytic core - and F(0) - the membrane proton channel. F(1) has five subunits: alpha(3), beta(3), gamma(1), delta(1), epsilon(1). F(0) has four main subunits: a(1), b(1), b'(1) and c(10-14). The alpha and beta chains form an alternating ring which encloses part of the gamma chain. F(1) is attached to F(0) by a central stalk formed by the gamma and epsilon chains, while a peripheral stalk is formed by the delta, b and b' chains.

The protein resides in the cellular thylakoid membrane. F(1)F(0) ATP synthase produces ATP from ADP in the presence of a proton or sodium gradient. F-type ATPases consist of two structural domains, F(1) containing the extramembraneous catalytic core and F(0) containing the membrane proton channel, linked together by a central stalk and a peripheral stalk. During catalysis, ATP synthesis in the catalytic domain of F(1) is coupled via a rotary mechanism of the central stalk subunits to proton translocation. Functionally, component of the F(0) channel, it forms part of the peripheral stalk, linking F(1) to F(0). The b'-subunit is a diverged and duplicated form of b found in plants and photosynthetic bacteria. The polypeptide is ATP synthase subunit b' (Prochlorococcus marinus (strain MIT 9301)).